The chain runs to 393 residues: MKRPVTGKDLMIVNMGPHHPSMHGVLRLIVTLDGEDVVDCEPILGYLHRGMEKIAENRAIIQYLPYVTRWDYLATMFTEAITVNGPEQLGNIQIPKRASYIRVIMLELSRIASHLLWLGPFMADIGAQTPFFYIFREREFVYDLFEAATGMRMMHNFFRIGGIAADLPYGWIDKCLDFCDYFLTEVVEYQKLITRNPIFLERVEGVGIIDGEEAINWGLSGPMLRASGIPWDLRKVDRYESYDEFEWEIQWQKQGDSLARYLVRLSEMTESIKIIQQALEGLPGGPYENLESRGFDRKRNPEWNDFEYRFISKKPSPTFELSKQELYVRVEAPKGELGIFLIGDQSGFPWRWKIRPPGFINLQILPELVKRMKLADIMTILGSIDIIMGEVDR.

Belongs to the complex I 49 kDa subunit family. As to quaternary structure, NDH is composed of at least 16 different subunits, 5 of which are encoded in the nucleus.

It localises to the plastid. Its subcellular location is the chloroplast thylakoid membrane. It carries out the reaction a plastoquinone + NADH + (n+1) H(+)(in) = a plastoquinol + NAD(+) + n H(+)(out). It catalyses the reaction a plastoquinone + NADPH + (n+1) H(+)(in) = a plastoquinol + NADP(+) + n H(+)(out). Functionally, NDH shuttles electrons from NAD(P)H:plastoquinone, via FMN and iron-sulfur (Fe-S) centers, to quinones in the photosynthetic chain and possibly in a chloroplast respiratory chain. The immediate electron acceptor for the enzyme in this species is believed to be plastoquinone. Couples the redox reaction to proton translocation, and thus conserves the redox energy in a proton gradient. In Draba nemorosa (Woodland whitlowgrass), this protein is NAD(P)H-quinone oxidoreductase subunit H, chloroplastic.